Here is a 21-residue protein sequence, read N- to C-terminus: Serine protease inhibitor 1 (21 aa).

Positions 1–21 constitute a Pacifastin domain; sequence EQQCTPGQTKKEDCNNCTSGD. Residues 1 to 21 are disordered; the sequence is EQQCTPGQTKKEDCNNCTSGD.

Belongs to the protease inhibitor I19 family. As to expression, expressed in hemolymph.

The protein localises to the secreted. Its function is as follows. Probable serine protease inhibitor. The chain is Serine protease inhibitor 1 from Melanoplus sanguinipes (Migratory grasshopper).